The primary structure comprises 354 residues: Hyaluronan and proteoglycan link protein 1 (354 aa).

Positions 1–9 (MKSLLLLVL) are excised as a propeptide. N-linked (GlcNAc...) asparagine glycosylation is found at N21 and N56. The Ig-like V-type domain maps to 38–152 (PRLLVEAEQA…EGLEDDTAVV (115 aa)). 5 cysteine pairs are disulfide-bonded: C61–C139, C181–C252, C205–C226, C279–C349, and C304–C325. Link domains lie at 159-254 (VVFP…FCFT) and 259-351 (GRFY…YCFR).

The protein belongs to the HAPLN family.

The protein resides in the secreted. The protein localises to the extracellular space. Its subcellular location is the extracellular matrix. Its function is as follows. Stabilizes the aggregates of proteoglycan monomers with hyaluronic acid in the extracellular cartilage matrix. The chain is Hyaluronan and proteoglycan link protein 1 (HAPLN1) from Sus scrofa (Pig).